Consider the following 534-residue polypeptide: CTP synthase (534 aa).

The amidoligase domain stretch occupies residues 1 to 269; it reads MHVSNSKFIF…DKIIIDAFRL (269 aa). Serine 17 is a binding site for CTP. Serine 17 provides a ligand contact to UTP. 18-23 provides a ligand contact to ATP; the sequence is SLGKGV. Tyrosine 58 is a binding site for L-glutamine. Residue aspartate 75 participates in ATP binding. The Mg(2+) site is built by aspartate 75 and glutamate 143. CTP contacts are provided by residues 150 to 152, 190 to 195, and lysine 226; these read DIE and KTKPTQ. UTP contacts are provided by residues 190–195 and lysine 226; that span reads KTKPTQ. In terms of domain architecture, Glutamine amidotransferase type-1 spans 294-532; that stretch reads DIAIVGKYIK…IENAYIYKKE (239 aa). Glycine 352 is an L-glutamine binding site. Cysteine 379 (nucleophile; for glutamine hydrolysis) is an active-site residue. L-glutamine is bound by residues 380 to 383, glutamate 403, and arginine 460; that span reads LGMQ. Residues histidine 505 and glutamate 507 contribute to the active site.

Belongs to the CTP synthase family. In terms of assembly, homotetramer.

The enzyme catalyses UTP + L-glutamine + ATP + H2O = CTP + L-glutamate + ADP + phosphate + 2 H(+). It carries out the reaction L-glutamine + H2O = L-glutamate + NH4(+). The catalysed reaction is UTP + NH4(+) + ATP = CTP + ADP + phosphate + 2 H(+). Its pathway is pyrimidine metabolism; CTP biosynthesis via de novo pathway; CTP from UDP: step 2/2. Its activity is regulated as follows. Allosterically activated by GTP, when glutamine is the substrate; GTP has no effect on the reaction when ammonia is the substrate. The allosteric effector GTP functions by stabilizing the protein conformation that binds the tetrahedral intermediate(s) formed during glutamine hydrolysis. Inhibited by the product CTP, via allosteric rather than competitive inhibition. In terms of biological role, catalyzes the ATP-dependent amination of UTP to CTP with either L-glutamine or ammonia as the source of nitrogen. Regulates intracellular CTP levels through interactions with the four ribonucleotide triphosphates. The sequence is that of CTP synthase from Hydrogenobaculum sp. (strain Y04AAS1).